The primary structure comprises 234 residues: Conidial surface nicotinamide adenine dinucleotide glycohydrolase nadA (234 aa).

An N-terminal signal peptide occupies residues 1-20 (MIFTNAILVISALLPATVLS). The thump stretch occupies residues 21 to 117 (LQHTEDSLFP…LDTEEQPILG (97 aa)). Disulfide bonds link C33-C80 and C38-C50. N45, N95, and N118 each carry an N-linked (GlcNAc...) asparagine glycan. A TNT domain is found at 120 to 212 (TLPVGMKLDR…GLIDDGYLRR (93 aa)). Residue R129 is part of the active site. NAD(+) contacts are provided by F130, T136, and R148. Q194 is an active-site residue. 4 residues coordinate Ca(2+): S216, D219, E220, and E223.

It belongs to the fungal surface NADase family. In terms of assembly, homodimer. N-glycosylated.

The protein resides in the secreted. The enzyme catalyses NAD(+) + H2O = ADP-D-ribose + nicotinamide + H(+). It catalyses the reaction NADP(+) + H2O = ADP-D-ribose 2'-phosphate + nicotinamide + H(+). Its activity is regulated as follows. The catalytic activity is positively regulated by calcium via its binding to the calcium-binding site. Its function is as follows. Conidial surface nicotinamide adenine dinucleotide glycohydrolase that cleave NAD(+) and NADP(+) but not their reduced counterparts, NADH and NADPH. Lacks both ADP-ribosyl cyclase and base exchange activity and does not mediate synthesis of calcium messengers cADPR or NAADP. Plays a role in pathogenicity by depleting the host's NAD(+) pool. The sequence is that of Conidial surface nicotinamide adenine dinucleotide glycohydrolase nadA from Aspergillus fumigatus (strain ATCC MYA-4609 / CBS 101355 / FGSC A1100 / Af293) (Neosartorya fumigata).